Here is a 144-residue protein sequence, read N- to C-terminus: Neuritin-A (144 aa).

A signal peptide spans 1-27 (MGLKLSGRYIFLVLAVHLAYLLQAVKA). The GPI-anchor amidated serine moiety is linked to residue S114. The propeptide at 115-144 (AGAPGQRLLFPAFLPLLMVFLSTLFILVLQ) is removed in mature form.

This sequence belongs to the neuritin family. As to expression, expressed in sensory regions of the brain including the visual, auditory and olfactory systems. Within the retina, only expressed in the retinal ganglion cells. Concentrated in axon tracts including retinal axons.

It localises to the cell membrane. Modulates postsynaptic dendritic arbor elaboration and synaptic maturation. The sequence is that of Neuritin-A (nrn1-a) from Xenopus laevis (African clawed frog).